The sequence spans 473 residues: NAC domain-containing protein 68 (473 aa).

One can recognise an NAC domain in the interval 4–154 (GLIGYRFSPT…KYVVCQVKYK (151 aa)). The DNA-binding element occupies 108–160 (IGIKKTLVYHEGKSPHGVRTPWVMHEYHITCLPHHKRKYVVCQVKYKGEAAEI). The tract at residues 326–380 (DHMPRKPVTGTIDYSSDSGSDAGSISTTSYQGTSSPNISVGSSSRHLSSCSSTDS) is disordered. Composition is skewed to low complexity over residues 340–354 (SSDS…STTS) and 364–379 (SVGS…SSTD). The helical transmembrane segment at 446-468 (FIYLMKMIIGNIISVLLPVKRLI) threads the bilayer.

The protein localises to the membrane. It localises to the nucleus. Functionally, transcription activator activated by proteolytic cleavage through regulated intramembrane proteolysis (RIP) mediated by calpain or its functional homolog. Regulates cytokinin signaling during cell division. In Arabidopsis thaliana (Mouse-ear cress), this protein is NAC domain-containing protein 68 (NAC68).